Reading from the N-terminus, the 440-residue chain is Branched-chain amino acid permease BrnQ (440 aa).

A run of 12 helical transmembrane segments spans residues 9–29 (YIII…NLIF), 46–66 (AGFL…FVFS), 80–100 (PVFG…FFAI), 121–141 (SPVS…LLSL), 149–169 (IVGK…VAVA), 196–216 (GYLT…VNAL), 227–247 (LIVV…VMYT), 284–304 (ILLG…LITA), 321–341 (IAVV…TQLI), 348–368 (LLTM…HSVF), 378–398 (SLLF…GIKI), and 414–434 (IGLG…ILSI).

The protein belongs to the branched chain amino acid transporter family.

The protein localises to the cell membrane. In terms of biological role, branched-chain amino acid transport system which is involved in the uptake of isoleucine and valine. Probably does not transport leucine. Together with BcaP and BraB, plays an important role in the activation of CodY, a branched-chain amino acid-responsive transcriptional regulator that controls the expression of several dozen transcription units in B.subtilis. In Bacillus subtilis (strain 168), this protein is Branched-chain amino acid permease BrnQ.